Consider the following 250-residue polypeptide: HTH-type transcriptional regulator SarS (250 aa).

DNA-binding regions (H-T-H motif) lie at residues 53 to 76 (FKKIVSDLCYKQSDLVQHIKVLVK) and 177 to 200 (LKDLIETIHHKYPQTVRALNNLKK).

It belongs to the SarA family.

The protein resides in the cytoplasm. Transcriptional regulator that controls expression of some virulence factors in a cell density-dependent manner. The sequence is that of HTH-type transcriptional regulator SarS (sarS) from Staphylococcus aureus (strain Mu3 / ATCC 700698).